Reading from the N-terminus, the 250-residue chain is UPF0494 membrane protein PB2B2.07c (250 aa).

Helical transmembrane passes span 98 to 118 (WPLL…NFEV), 144 to 164 (IAIY…MFPL), and 179 to 199 (MIIA…GATI).

This sequence belongs to the UPF0494 family.

Its subcellular location is the cytoplasm. The protein localises to the endoplasmic reticulum. It is found in the golgi apparatus. The protein resides in the membrane. The chain is UPF0494 membrane protein PB2B2.07c from Schizosaccharomyces pombe (strain 972 / ATCC 24843) (Fission yeast).